A 429-amino-acid polypeptide reads, in one-letter code: MDNLNRVASGPDVRTLMAEIGREARKAARTLSLASTETKNSALLAAAAAIRTKAGAIAAANAQDYAAAQAKGVAGSFLDRLKLDPSRIEAMARGIAEVAALPDPVGRVLARFERPNGLVIERVAVPLGVIGIIYESRPAVTADAGALCLKAGNAAILRGGSESLRSAALIHDCLVAGLLEAGLPAAAISRVPIADRAAVGEMLSGLNGDIDVIVPRGGKSLVARVQNEARVPVFAHLEGVVHIYIDRAADLAKATKILLNAKLRRTGVCGAAETLLVDRACAATHLAPLVKTLLDAGCAVRGDAAALEADPRVSPASEADWSAEYLDAIISVRLVDGIDGAIAHIEAYGSHHTDCIVTEDPAAADRFLAEVDSAIVMHNASTQFADGGEFGFGGEIGIATGRMHARGPVGVEQLTTFKYRVHGDGQIRP.

The protein belongs to the gamma-glutamyl phosphate reductase family.

The protein localises to the cytoplasm. The catalysed reaction is L-glutamate 5-semialdehyde + phosphate + NADP(+) = L-glutamyl 5-phosphate + NADPH + H(+). Its pathway is amino-acid biosynthesis; L-proline biosynthesis; L-glutamate 5-semialdehyde from L-glutamate: step 2/2. Its function is as follows. Catalyzes the NADPH-dependent reduction of L-glutamate 5-phosphate into L-glutamate 5-semialdehyde and phosphate. The product spontaneously undergoes cyclization to form 1-pyrroline-5-carboxylate. This Methylocella silvestris (strain DSM 15510 / CIP 108128 / LMG 27833 / NCIMB 13906 / BL2) protein is Gamma-glutamyl phosphate reductase.